Reading from the N-terminus, the 132-residue chain is Histone H2A.1 (132 aa).

It belongs to the histone H2A family. The nucleosome is a histone octamer containing two molecules each of H2A, H2B, H3 and H4 assembled in one H3-H4 heterotetramer and two H2A-H2B heterodimers. The octamer wraps approximately 147 bp of DNA.

The protein localises to the nucleus. It is found in the chromosome. In terms of biological role, core component of nucleosome. Nucleosomes wrap and compact DNA into chromatin, limiting DNA accessibility to the cellular machineries which require DNA as a template. Histones thereby play a central role in transcription regulation, DNA repair, DNA replication and chromosomal stability. DNA accessibility is regulated via a complex set of post-translational modifications of histones, also called histone code, and nucleosome remodeling. In Leishmania infantum, this protein is Histone H2A.1.